Consider the following 135-residue polypeptide: Small ribosomal subunit protein uS11 (135 aa).

The span at 1–10 (MPPKTRSQTG) shows a compositional bias: polar residues. The tract at residues 1–28 (MPPKTRSQTGAKKVRRKEKKNVAHGHAH) is disordered. Residues 12–28 (KKVRRKEKKNVAHGHAH) show a composition bias toward basic residues.

Belongs to the universal ribosomal protein uS11 family. Part of the 30S ribosomal subunit. Interacts with proteins S7 and S18. Binds to IF-3.

Located on the platform of the 30S subunit, it bridges several disparate RNA helices of the 16S rRNA. Forms part of the Shine-Dalgarno cleft in the 70S ribosome. In Acidothermus cellulolyticus (strain ATCC 43068 / DSM 8971 / 11B), this protein is Small ribosomal subunit protein uS11.